The primary structure comprises 899 residues: Calcium-transporting ATPase 1 (899 aa).

4 helical membrane-spanning segments follow: residues 59-79, 80-100, 247-267, and 282-302; these read FVKD…VTLG, NIDD…VGFV, QLSL…FFQG, and VAAI…LGVL. The 4-aspartylphosphate intermediate role is filled by Asp-329. A run of 4 helical transmembrane segments spans residues 688–708, 757–777, 827–847, and 854–874; these read FQLS…VFGF, QLLQ…IVVF, FNIA…ASPF, and EAIG…VLWV. Ser-892 is modified (phosphoserine).

The protein belongs to the cation transport ATPase (P-type) (TC 3.A.3) family.

It is found in the endoplasmic reticulum membrane. The enzyme catalyses Ca(2+)(in) + ATP + H2O = Ca(2+)(out) + ADP + phosphate + H(+). Functionally, transports calcium and manganese ions into the cell. Regulates cell morphogenesis through control of manganese and calcium homeostasis. The chain is Calcium-transporting ATPase 1 (pmr1) from Schizosaccharomyces pombe (strain 972 / ATCC 24843) (Fission yeast).